Here is a 438-residue protein sequence, read N- to C-terminus: uncharacterized protein (438 aa).

This is an uncharacterized protein from Acanthamoeba polyphaga mimivirus (APMV).